The chain runs to 1467 residues: Gag-Pol polyprotein (1467 aa).

Glycine 2 is lipidated: N-myristoyl glycine; by host. Positions 16-22 (FEHIRLR) match the Nuclear export signal motif. A Nuclear localization signal motif is present at residues 26–32 (KKKYQIK). The disordered stretch occupies residues 116 to 144 (NAERNTTETSSGQKKNDKGVTVPPGGSQN). 2 CCHC-type zinc fingers span residues 402 to 419 (VKCY…QCPE) and 423 to 440 (MRCL…DCRG). Residues 535-606 (IKALLDTGAD…TPINIIGRNL (72 aa)) enclose the Peptidase A2 domain. The active-site For protease activity; shared with dimeric partner is aspartate 540. The Reverse transcriptase domain maps to 662–852 (EGKISRVGGE…PPYEWMGYKL (191 aa)). Residues aspartate 728, aspartate 803, and aspartate 804 each contribute to the Mg(2+) site. Positions 845 to 853 (YEWMGYKLW) are RT 'primer grip'. Residues 1015 to 1031 (WEQWWADYWQVSWIPEW) carry the Tryptophan repeat motif motif. Residues 1050 to 1173 (PIPKEDVYYV…IDKLVSKGIR (124 aa)) enclose the RNase H type-1 domain. Positions 1114 and 1165 each coordinate Mg(2+). The Integrase-type zinc-finger motif lies at 1179–1220 (EKIEEAQEKHERYHNNWKNLADTYGLPQIVAKEIVAMCPKCQ). Zn(2+) contacts are provided by histidine 1188, histidine 1192, cysteine 1216, and cysteine 1219. Residues 1230–1380 (VDASPGTWQM…TSAERLINII (151 aa)) enclose the Integrase catalytic domain. Mg(2+) contacts are provided by aspartate 1240 and aspartate 1292. A DNA-binding region (integrase-type) is located at residues 1399 to 1446 (FRVYYREGRDPVWKGPAQLIWKGEGAVVLKDGSDLKVVPRRKAKIIKD). A disordered region spans residues 1447–1467 (YEPKQRVGNEGDVEGTRGSDN).

In terms of assembly, homotrimer. Interacts with gp41 (via C-terminus). Homodimer. The active site consists of two apposed aspartic acid residues. As to quaternary structure, heterodimer of p66 RT and p51 RT (RT p66/p51). Heterodimerization of RT is essential for DNA polymerase activity. Despite the sequence identities, p66 RT and p51 RT have distinct folding. In terms of assembly, homotetramer; may further associate as a homohexadecamer. The cofactor is Mg(2+). Post-translationally, specific enzymatic cleavages by the viral protease yield mature proteins. The protease is released by autocatalytic cleavage. The polyprotein is cleaved during and after budding, this process is termed maturation. Proteolytic cleavage of p66 RT removes the RNase H domain to yield the p51 RT subunit. Capsid protein p24 is phosphorylated.

It is found in the virion. The protein localises to the host nucleus. Its subcellular location is the host cytoplasm. The protein resides in the host cell membrane. It carries out the reaction Specific for a P1 residue that is hydrophobic, and P1' variable, but often Pro.. It catalyses the reaction Endohydrolysis of RNA in RNA/DNA hybrids. Three different cleavage modes: 1. sequence-specific internal cleavage of RNA. Human immunodeficiency virus type 1 and Moloney murine leukemia virus enzymes prefer to cleave the RNA strand one nucleotide away from the RNA-DNA junction. 2. RNA 5'-end directed cleavage 13-19 nucleotides from the RNA end. 3. DNA 3'-end directed cleavage 15-20 nucleotides away from the primer terminus.. The enzyme catalyses 3'-end directed exonucleolytic cleavage of viral RNA-DNA hybrid.. The catalysed reaction is DNA(n) + a 2'-deoxyribonucleoside 5'-triphosphate = DNA(n+1) + diphosphate. The viral protease is inhibited by many synthetic protease inhibitors (PIs), such as amprenavir, atazanavir, indinavir, loprinavir, nelfinavir, ritonavir and saquinavir. RT can be inhibited either by nucleoside RT inhibitors (NRTIs) or by non nucleoside RT inhibitors (NNRTIs). NRTIs act as chain terminators, whereas NNRTIs inhibit DNA polymerization by binding a small hydrophobic pocket near the RT active site and inducing an allosteric change in this region. Classical NRTIs are abacavir, adefovir (PMEA), didanosine (ddI), lamivudine (3TC), stavudine (d4T), tenofovir (PMPA), zalcitabine (ddC), and zidovudine (AZT). Classical NNRTIs are atevirdine (BHAP U-87201E), delavirdine, efavirenz (DMP-266), emivirine (I-EBU), and nevirapine (BI-RG-587). The tritherapies used as a basic effective treatment of AIDS associate two NRTIs and one NNRTI. Use of protease inhibitors in tritherapy regimens permit more ambitious therapeutic strategies. Gag-Pol polyprotein and Gag polyprotein may regulate their own translation, by the binding genomic RNA in the 5'-UTR. At low concentration, Gag-Pol and Gag would promote translation, whereas at high concentration, the polyproteins encapsidate genomic RNA and then shut off translation. Functionally, matrix protein p17 has two main functions: in infected cell, it targets Gag and Gag-pol polyproteins to the plasma membrane via a multipartite membrane-binding signal, that includes its myristointegration complex. The myristoylation signal and the NLS exert conflicting influences its subcellular localization. The key regulation of these motifs might be phosphorylation of a portion of MA molecules on the C-terminal tyrosine at the time of virus maturation, by virion-associated cellular tyrosine kinase. Implicated in the release from host cell mediated by Vpu. In terms of biological role, capsid protein p24 forms the conical core that encapsulates the genomic RNA-nucleocapsid complex in the virion. The core is constituted by capsid protein hexamer subunits. The core is disassembled soon after virion entry. Interaction with host PPIA/CYPA protects the virus from restriction by host TRIM5-alpha and from an unknown antiviral activity in host cells. This capsid restriction by TRIM5 is one of the factors which restricts SIV to the simian species. Its function is as follows. Nucleocapsid protein p7 encapsulates and protects viral dimeric unspliced (genomic) RNA. Binds these RNAs through its zinc fingers. Facilitates rearangement of nucleic acid secondary structure during retrotranscription of genomic RNA. This capability is referred to as nucleic acid chaperone activity. The aspartyl protease mediates proteolytic cleavages of Gag and Gag-Pol polyproteins during or shortly after the release of the virion from the plasma membrane. Cleavages take place as an ordered, step-wise cascade to yield mature proteins. This process is called maturation. Displays maximal activity during the budding process just prior to particle release from the cell. Also cleaves Nef and Vif, probably concomitantly with viral structural proteins on maturation of virus particles. Hydrolyzes host EIF4GI and PABP1 in order to shut off the capped cellular mRNA translation. The resulting inhibition of cellular protein synthesis serves to ensure maximal viral gene expression and to evade host immune response. Functionally, reverse transcriptase/ribonuclease H (RT) is a multifunctional enzyme that converts the viral dimeric RNA genome into dsDNA in the cytoplasm, shortly after virus entry into the cell. This enzyme displays a DNA polymerase activity that can copy either DNA or RNA templates, and a ribonuclease H (RNase H) activity that cleaves the RNA strand of RNA-DNA heteroduplexes in a partially processive 3' to 5' endonucleasic mode. Conversion of viral genomic RNA into dsDNA requires many steps. A tRNA binds to the primer-binding site (PBS) situated at the 5'-end of the viral RNA. RT uses the 3' end of the tRNA primer to perform a short round of RNA-dependent minus-strand DNA synthesis. The reading proceeds through the U5 region and ends after the repeated (R) region which is present at both ends of viral RNA. The portion of the RNA-DNA heteroduplex is digested by the RNase H, resulting in a ssDNA product attached to the tRNA primer. This ssDNA/tRNA hybridizes with the identical R region situated at the 3' end of viral RNA. This template exchange, known as minus-strand DNA strong stop transfer, can be either intra- or intermolecular. RT uses the 3' end of this newly synthesized short ssDNA to perform the RNA-dependent minus-strand DNA synthesis of the whole template. RNase H digests the RNA template except for two polypurine tracts (PPTs) situated at the 5'-end and near the center of the genome. It is not clear if both polymerase and RNase H activities are simultaneous. RNase H can probably proceed both in a polymerase-dependent (RNA cut into small fragments by the same RT performing DNA synthesis) and a polymerase-independent mode (cleavage of remaining RNA fragments by free RTs). Secondly, RT performs DNA-directed plus-strand DNA synthesis using the PPTs that have not been removed by RNase H as primers. PPTs and tRNA primers are then removed by RNase H. The 3' and 5' ssDNA PBS regions hybridize to form a circular dsDNA intermediate. Strand displacement synthesis by RT to the PBS and PPT ends produces a blunt ended, linear dsDNA copy of the viral genome that includes long terminal repeats (LTRs) at both ends. In terms of biological role, integrase catalyzes viral DNA integration into the host chromosome, by performing a series of DNA cutting and joining reactions. This enzyme activity takes place after virion entry into a cell and reverse transcription of the RNA genome in dsDNA. The first step in the integration process is 3' processing. This step requires a complex comprising the viral genome, matrix protein, Vpr and integrase. This complex is called the pre-integration complex (PIC). The integrase protein removes 2 nucleotides from each 3' end of the viral DNA, leaving recessed CA OH's at the 3' ends. In the second step, the PIC enters cell nucleus. This process is mediated through integrase and Vpr proteins, and allows the virus to infect a non dividing cell. This ability to enter the nucleus is specific of lentiviruses, other retroviruses cannot and rely on cell division to access cell chromosomes. In the third step, termed strand transfer, the integrase protein joins the previously processed 3' ends to the 5' ends of strands of target cellular DNA at the site of integration. The 5'-ends are produced by integrase-catalyzed staggered cuts, 5 bp apart. A Y-shaped, gapped, recombination intermediate results, with the 5'-ends of the viral DNA strands and the 3' ends of target DNA strands remaining unjoined, flanking a gap of 5 bp. The last step is viral DNA integration into host chromosome. This involves host DNA repair synthesis in which the 5 bp gaps between the unjoined strands are filled in and then ligated. Since this process occurs at both cuts flanking the SIV genome, a 5 bp duplication of host DNA is produced at the ends of SIV integration. Alternatively, Integrase may catalyze the excision of viral DNA just after strand transfer, this is termed disintegration. The chain is Gag-Pol polyprotein (gag-pol) from Cercopithecidae (Old World monkeys).